The sequence spans 86 residues: Mitochondrial import inner membrane translocase subunit Tim10 (86 aa).

The Twin CX3C motif motif lies at Cys-29–Cys-54. 2 disulfide bridges follow: Cys-29/Cys-54 and Cys-33/Cys-50.

The protein belongs to the small Tim family. Heterohexamer; composed of 3 copies of tim-9/tin-9.1 and 3 copies of tim-10/tin-10, named soluble 70 kDa complex. The complex associates with the tim-22 component of the TIM22 complex. Interacts with multi-pass transmembrane proteins in transit.

The protein localises to the mitochondrion inner membrane. In terms of biological role, mitochondrial intermembrane chaperone that participates in the import and insertion of multi-pass transmembrane proteins into the mitochondrial inner membrane. May also be required for the transfer of beta-barrel precursors from the TOM complex to the sorting and assembly machinery (SAM complex) of the outer membrane. Acts as a chaperone-like protein that protects the hydrophobic precursors from aggregation and guide them through the mitochondrial intermembrane space. The sequence is that of Mitochondrial import inner membrane translocase subunit Tim10 (tin-10) from Caenorhabditis elegans.